A 102-amino-acid chain; its full sequence is NADH-quinone oxidoreductase subunit K (102 aa).

3 helical membrane passes run leucine 6–alanine 26, methionine 30–alanine 50, and methionine 63–leucine 83.

It belongs to the complex I subunit 4L family. As to quaternary structure, NDH-1 is composed of 14 different subunits. Subunits NuoA, H, J, K, L, M, N constitute the membrane sector of the complex.

It localises to the cell inner membrane. It catalyses the reaction a quinone + NADH + 5 H(+)(in) = a quinol + NAD(+) + 4 H(+)(out). In terms of biological role, NDH-1 shuttles electrons from NADH, via FMN and iron-sulfur (Fe-S) centers, to quinones in the respiratory chain. The immediate electron acceptor for the enzyme in this species is believed to be ubiquinone. Couples the redox reaction to proton translocation (for every two electrons transferred, four hydrogen ions are translocated across the cytoplasmic membrane), and thus conserves the redox energy in a proton gradient. The chain is NADH-quinone oxidoreductase subunit K from Rhodopseudomonas palustris (strain TIE-1).